A 341-amino-acid chain; its full sequence is Large ribosomal subunit protein uL29m (341 aa).

Positions leucine 44–aspartate 74 are disordered. The segment covering arginine 48–valine 62 has biased composition (basic residues).

Belongs to the universal ribosomal protein uL29 family. As to quaternary structure, component of the mitochondrial large ribosomal subunit. Mature mitochondrial ribosomes consist of a small (37S) and a large (54S) subunit. The 37S subunit contains at least 33 different proteins and 1 molecule of RNA (15S). The 54S subunit contains at least 45 different proteins and 1 molecule of RNA (21S).

The protein resides in the mitochondrion. This Eremothecium gossypii (strain ATCC 10895 / CBS 109.51 / FGSC 9923 / NRRL Y-1056) (Yeast) protein is Large ribosomal subunit protein uL29m (MRPL4).